Consider the following 543-residue polypeptide: CTP synthase (543 aa).

Positions 1-267 (MAKFVFVTGG…CREVLDVLNL (267 aa)) are amidoligase domain. CTP is bound at residue Ser-13. Position 13 (Ser-13) interacts with UTP. 14-19 (SIGKGI) provides a ligand contact to ATP. Tyr-54 contributes to the L-glutamine binding site. Position 71 (Asp-71) interacts with ATP. Mg(2+) contacts are provided by Asp-71 and Glu-141. CTP contacts are provided by residues 148 to 150 (DIE), 188 to 193 (KTKPTQ), and Lys-224. UTP contacts are provided by residues 188–193 (KTKPTQ) and Lys-224. The Glutamine amidotransferase type-1 domain occupies 292–534 (KVALVGKYVQ…IEAAQQRLPN (243 aa)). Position 354 (Gly-354) interacts with L-glutamine. Cys-381 acts as the Nucleophile; for glutamine hydrolysis in catalysis. Residues 382-385 (LGMQ), Glu-405, and Arg-462 contribute to the L-glutamine site. Residues His-507 and Glu-509 contribute to the active site.

This sequence belongs to the CTP synthase family. Homotetramer.

The enzyme catalyses UTP + L-glutamine + ATP + H2O = CTP + L-glutamate + ADP + phosphate + 2 H(+). The catalysed reaction is L-glutamine + H2O = L-glutamate + NH4(+). It carries out the reaction UTP + NH4(+) + ATP = CTP + ADP + phosphate + 2 H(+). Its pathway is pyrimidine metabolism; CTP biosynthesis via de novo pathway; CTP from UDP: step 2/2. Its activity is regulated as follows. Allosterically activated by GTP, when glutamine is the substrate; GTP has no effect on the reaction when ammonia is the substrate. The allosteric effector GTP functions by stabilizing the protein conformation that binds the tetrahedral intermediate(s) formed during glutamine hydrolysis. Inhibited by the product CTP, via allosteric rather than competitive inhibition. Catalyzes the ATP-dependent amination of UTP to CTP with either L-glutamine or ammonia as the source of nitrogen. Regulates intracellular CTP levels through interactions with the four ribonucleotide triphosphates. In Synechococcus sp. (strain WH7803), this protein is CTP synthase.